The chain runs to 477 residues: Proline--tRNA ligase (477 aa).

This sequence belongs to the class-II aminoacyl-tRNA synthetase family. ProS type 3 subfamily. As to quaternary structure, homodimer.

It is found in the cytoplasm. The catalysed reaction is tRNA(Pro) + L-proline + ATP = L-prolyl-tRNA(Pro) + AMP + diphosphate. Functionally, catalyzes the attachment of proline to tRNA(Pro) in a two-step reaction: proline is first activated by ATP to form Pro-AMP and then transferred to the acceptor end of tRNA(Pro). The polypeptide is Proline--tRNA ligase (Methanocorpusculum labreanum (strain ATCC 43576 / DSM 4855 / Z)).